Reading from the N-terminus, the 421-residue chain is Phosphatidylinositol 5-phosphate 4-kinase type-2 gamma (421 aa).

Ala-2 carries the N-acetylalanine modification. Ser-26 bears the Phosphoserine mark. A PIPK domain is found at 43 to 420 (AADPLVGVFL…RFLDFITNIF (378 aa)). The segment at 69–75 (VMLLPDD) is required for interaction with PIP5K1A. Ser-349 is modified (phosphoserine).

Interacts with PIP5K1A; the interaction inhibits PIP5K1A kinase activity. Phosphorylated, phosphorylation is induced by EGF.

The protein resides in the endoplasmic reticulum. It is found in the cytoplasm. It catalyses the reaction a 1,2-diacyl-sn-glycero-3-phospho-(1D-myo-inositol-5-phosphate) + ATP = a 1,2-diacyl-sn-glycero-3-phospho-(1D-myo-inositol-4,5-bisphosphate) + ADP + H(+). The catalysed reaction is 1,2-dihexadecanoyl-sn-glycero-3-phospho-(1D-myo-inositol-5-phosphate) + ATP = 1,2-dihexadecanoyl-sn-glycero-3-phospho-(1D-myo-inositol-4,5-bisphosphate) + ADP + H(+). It carries out the reaction 1,2-dihexadecanoyl-sn-glycero-3-phospho-(1D-myo-inositol-5-phosphate) + GTP = 1,2-dihexadecanoyl-sn-glycero-3-phospho-(1D-myo-inositol-4,5-bisphosphate) + GDP + H(+). In terms of biological role, phosphatidylinositol 5-phosphate 4-kinase with low enzymatic activity. May be a GTP sensor, has higher GTP-dependent kinase activity than ATP-dependent kinase activity. PIP4Ks negatively regulate insulin signaling through a catalytic-independent mechanism. They interact with PIP5Ks and suppress PIP5K-mediated PtdIns(4,5)P2 synthesis and insulin-dependent conversion to PtdIns(3,4,5)P3. In Homo sapiens (Human), this protein is Phosphatidylinositol 5-phosphate 4-kinase type-2 gamma.